Here is a 438-residue protein sequence, read N- to C-terminus: Aspartate--tRNA(Asp/Asn) ligase (438 aa).

Glutamate 176 provides a ligand contact to L-aspartate. The segment at 198–201 (QLYK) is aspartate. L-aspartate is bound at residue arginine 220. ATP contacts are provided by residues 220-222 (RAE), 228-230 (RHL), and glutamate 361. Glutamate 361 and serine 364 together coordinate Mg(2+). The L-aspartate site is built by serine 364 and arginine 368. 409–412 (GADR) is a binding site for ATP.

The protein belongs to the class-II aminoacyl-tRNA synthetase family. Type 2 subfamily. In terms of assembly, homodimer. Mg(2+) serves as cofactor.

Its subcellular location is the cytoplasm. It carries out the reaction tRNA(Asx) + L-aspartate + ATP = L-aspartyl-tRNA(Asx) + AMP + diphosphate. In terms of biological role, aspartyl-tRNA synthetase with relaxed tRNA specificity since it is able to aspartylate not only its cognate tRNA(Asp) but also tRNA(Asn). Reaction proceeds in two steps: L-aspartate is first activated by ATP to form Asp-AMP and then transferred to the acceptor end of tRNA(Asp/Asn). The sequence is that of Aspartate--tRNA(Asp/Asn) ligase from Methanococcus maripaludis (strain C6 / ATCC BAA-1332).